A 215-amino-acid chain; its full sequence is HTH-type transcriptional regulator for conjugative element R391 (215 aa).

An HTH cro/C1-type domain is found at 8–61; that stretch reads LNHALQLTGVTQSELARRIGIKQQSISQICSGKSARSRYTMQIAEALRVNAHWL. A DNA-binding region (H-T-H motif) is located at residues 19–38; sequence QSELARRIGIKQQSISQICS.

Functionally, may control the expression of the integrase and inhibit excision of the mobile element R391, and regulate the expression of other genes as well. The sequence is that of HTH-type transcriptional regulator for conjugative element R391 from Providencia rettgeri.